The chain runs to 382 residues: Mannitol-1-phosphate 5-dehydrogenase (382 aa).

4-15 (AVHFGAGNIGRG) is an NAD(+) binding site.

Belongs to the mannitol dehydrogenase family.

The enzyme catalyses D-mannitol 1-phosphate + NAD(+) = beta-D-fructose 6-phosphate + NADH + H(+). In Vibrio parahaemolyticus serotype O3:K6 (strain RIMD 2210633), this protein is Mannitol-1-phosphate 5-dehydrogenase.